A 447-amino-acid chain; its full sequence is Histidine--tRNA ligase (447 aa).

Belongs to the class-II aminoacyl-tRNA synthetase family. In terms of assembly, homodimer.

It localises to the cytoplasm. It carries out the reaction tRNA(His) + L-histidine + ATP = L-histidyl-tRNA(His) + AMP + diphosphate + H(+). The protein is Histidine--tRNA ligase (hisS) of Synechocystis sp. (strain ATCC 27184 / PCC 6803 / Kazusa).